The chain runs to 812 residues: Phospholipase D alpha 1 (812 aa).

Residues methionine 1 to glycine 46 constitute a propeptide that is removed on maturation. A C2 domain is found at methionine 1–leucine 130. A Ca(2+)-binding site is contributed by aspartate 190. Positions threonine 330–arginine 368 constitute a PLD phosphodiesterase 1 domain. Active-site residues include histidine 335, lysine 337, and aspartate 342. Histidine 335 contacts a 1,2-diacyl-sn-glycero-3-phosphate. Ca(2+)-binding residues include histidine 374 and histidine 408. A 1,2-diacyl-sn-glycero-3-phosphate is bound by residues glutamine 524 and histidine 663. One can recognise a PLD phosphodiesterase 2 domain in the interval phenylalanine 658–serine 685. Active-site residues include histidine 663, lysine 665, and aspartate 670. Glutamate 724 contributes to the Ca(2+) binding site.

Belongs to the phospholipase D family. C2-PLD subfamily. As to quaternary structure, monomer. Ca(2+) serves as cofactor. In terms of tissue distribution, expressed in leaves, roots, developing seeds and cultured cells.

The enzyme catalyses a 1,2-diacyl-sn-glycero-3-phosphocholine + H2O = a 1,2-diacyl-sn-glycero-3-phosphate + choline + H(+). Hydrolyzes glycerol-phospholipids at the terminal phosphodiesteric bond. Plays an important role in various cellular processes. This is Phospholipase D alpha 1 (PLD1) from Oryza sativa subsp. japonica (Rice).